Reading from the N-terminus, the 1481-residue chain is MDVLELLRASANGCYNTIFSDAWSQYVSQQITSSLYLYIALGILTVLFVAWFIYFKRLARLRLRDEIARSLNAVTSASGGDLRGLRFRKRDKMLFYGRRMLRKMKNVSGQMYSSGKGYKRRAVMRFARRILQLRRENMPLEMRTVEPPAEYLEETIEGSDRVPPDALYMLQSIRIFGHFEKPVFLKLCKHTQVLELMAGDYLFKITDADDSVYIVQSGMINVYISNADGSTLSLKTVRKGESVTSLLSFIDVLSGNPSYYKTVTAKAMEKSVVIRLPMQAFEEVFRENPDVMIRVIQVIMIRLQRVLFTALRNYLGLNAELVQNHMRNKSITISGHLNSQSQSSQSMRQQTTATATGGTSATALGGQQLPAAVPSLPLQRQPPPPTIAPPLRHSREEHTLSGPNPNPNSGNNVQLPEVHGDAPNIDIYHQQQHGGSTSTGNLSTRRGSLVQPSIGGGGGGSTAQEGGCAAAGAPTIDMRLIQSSAVESLRKELGLPNEDAHIIEPFVEVRELEPNVTLITEGNADDVCIWFVMTGTLAVYQGVADATRSSTATTKSDKSDLLIHFVHPGEIVGGLAMLTGEASAYTIRSRNNSRVAYIRRAAIYQIMRQRPRIVLDLGNGVVRRLSPLVRQCDYALDWIFLESGRAVYRQDESSDSTYIVLSGRMRSVITNPGGKKEIVGEYGKGDLVGIVEMITETSRTTTVMAVRDSELAKLPEGLFNAIKLRYPIVVTKLISFLSHRFLGSMQTRGSTGAPGAPVEANPVTHKYSTVALVPITDEVPLTPFTYELYHSLCAIGPVLRLTSEVVRKQLGQNIFEAANEYRLTSWLAQQEDRNIITLYQCDNSLSPWTHRCMRQADVILIVGLGDRSHLVGKFEREIDRLAMRTQKELVLLYPETTNAKPANTLSWLNARPWVTKHHHVLCVKRIFTRKSQYRINDLYSRVLLSEPNMHSDFSRLARWLTGNSIGLVLGGGGARGAAHIGMLKAIQEAGIPIDMVGGVSIGALMGALWCSERNITTVTQKARQWSKKMTKWFLQLLDLTYPITSMFSGREFNKTIHDTFGDVSIEDLWIPYFTLTTDITASCHRIHTNGSLWRYVRSSMSLSGYMPPLCDPKDGHLLLDGGYVNNLPGHLWRYCRASMSIAGVFPPFCDYRDGHLLLDGCYTNNVPADVMHNLGAAHIIAIDVGSQDDTDLTNYGDDLSGWWLLYKKWNPFTSPVKVPDLPDIQSRLAYVSCVRQLEEVKNSDYCEYIRPPIDKYKTLAFGSFDEIRDVGYVFGKNYFESMAKAGRLGRFNQWFNKEPPKRGNHASLNEYTFIDLAQIVCKLPETYAVNTAEIFSEDEDCDGYISEPSTLNTDRRIQVPRAGNSLSLSEAEMDSDVEIDFRSDSKKDKATQSTPPAPGKDNEDKTDAVDRIPLLTLERPLTDQQQQHSDETDEQETPRAMKDGTNTMTTQTTSPTTDAGSEWAGSESELEKENKNVNTKN.

The Lumenal portion of the chain corresponds to 1–34; sequence MDVLELLRASANGCYNTIFSDAWSQYVSQQITSS. The chain crosses the membrane as a helical span at residues 35-55; that stretch reads LYLYIALGILTVLFVAWFIYF. Residues 56 to 1481 are Cytoplasmic-facing; sequence KRLARLRLRD…KENKNVNTKN (1426 aa). 175–302 serves as a coordination point for a nucleoside 3',5'-cyclic phosphate; it reads IFGHFEKPVF…IRVIQVIMIR (128 aa). Residues 336–420 are disordered; sequence HLNSQSQSSQ…NNVQLPEVHG (85 aa). Composition is skewed to low complexity over residues 339–379 and 401–412; these read SQSQ…LPLQ and SGPNPNPNSGNN. Serine 448 carries the phosphoserine modification. Residues 492-624 and 613-740 contribute to the a nucleoside 3',5'-cyclic phosphate site; these read ELGL…VVRR and IVLD…LSHR. The 167-residue stretch at 967-1133 folds into the PNPLA domain; sequence LVLGGGGARG…VNNLPGHLWR (167 aa). The GXGXXG motif lies at 971-976; that stretch reads GGGARG. The short motif at 998 to 1002 is the GXSXG element; that stretch reads GVSIG. Residue serine 1000 is the Nucleophile of the active site. The active-site Proton acceptor is the aspartate 1120. Residues 1120–1122 carry the DGA/G motif; sequence DGG. The residue at position 1214 (serine 1214) is a Phosphoserine. Positions 1366-1481 are disordered; sequence LSLSEAEMDS…KENKNVNTKN (116 aa). 2 stretches are compositionally biased toward basic and acidic residues: residues 1379–1390 and 1400–1410; these read IDFRSDSKKDKA and KDNEDKTDAVD. Residues 1445 to 1457 are compositionally biased toward low complexity; the sequence is TNTMTTQTTSPTT.

The protein belongs to the NTE family. In terms of assembly, interacts with Pka-C3; interaction inhibits the catalytic function of Pka-C3 and the esterase activity of sws.

Its subcellular location is the endoplasmic reticulum membrane. The catalysed reaction is a 1-acyl-sn-glycero-3-phosphocholine + H2O = sn-glycerol 3-phosphocholine + a fatty acid + H(+). Functionally, phospholipase B that deacylates intracellular phosphatidylcholine (PtdCho), generating glycerophosphocholine (GroPtdCho). This deacylation occurs at both sn-2 and sn-1 positions of PtdCho. Its specific chemical modification by certain organophosphorus (OP) compounds leads to distal axonopathy. Plays a role in the signaling mechanism between neurons and glia that regulates glia wrapping during development of the adult brain. Essential for membrane lipid homeostasis and cell survival in both neurons and glia of the adult brain. This Drosophila willistoni (Fruit fly) protein is Neuropathy target esterase sws.